The sequence spans 258 residues: Regulatory protein RecX (258 aa).

This sequence belongs to the RecX family.

Its subcellular location is the cytoplasm. Its function is as follows. Modulates RecA activity. The chain is Regulatory protein RecX from Streptococcus agalactiae serotype Ia (strain ATCC 27591 / A909 / CDC SS700).